The sequence spans 387 residues: MDISKVDSTRALVNHWRIFRIMGIHPPGKRTFWGRHYTAYSMVWNVTFHICIWVSFSVNLLQSNSLETFCESLCVTMPHTLYMLKLINVRRMRGEMISSHWLLRLLDKRLGCADERQIIMAGIERAEFIFRTIFRGLACTVVLGIIYISASSEPTLMYPTWIPWNWKDSTSAYLATAMLHTTALMANATLVLNLSSYPGTYLILVSVHTKALALRVSKLGYGAPLPAVRMQAILVGYIHDHQIILRLFKSLERSLSMTCFLQFFSTACAQCTICYFLLFGNVGIMRFMNMLFLLVILTTETLLLCYTAELPCKEGESLLTAVYSCNWLSQSVNFRRLLLLMLARCQIPMILVSGVIVPISMKTFTVMIKGAYTMLTLLNEIRKTSLE.

At 1 to 40 (MDISKVDSTRALVNHWRIFRIMGIHPPGKRTFWGRHYTAY) the chain is on the cytoplasmic side. Residues 41–61 (SMVWNVTFHICIWVSFSVNLL) form a helical membrane-spanning segment. Topologically, residues 62-71 (QSNSLETFCE) are extracellular. Residues 72–92 (SLCVTMPHTLYMLKLINVRRM) traverse the membrane as a helical segment. The Cytoplasmic portion of the chain corresponds to 93 to 127 (RGEMISSHWLLRLLDKRLGCADERQIIMAGIERAE). A helical transmembrane segment spans residues 128–148 (FIFRTIFRGLACTVVLGIIYI). The Extracellular segment spans residues 149–171 (SASSEPTLMYPTWIPWNWKDSTS). The chain crosses the membrane as a helical span at residues 172-192 (AYLATAMLHTTALMANATLVL). The Cytoplasmic portion of the chain corresponds to 193 to 254 (NLSSYPGTYL…LRLFKSLERS (62 aa)). Residues 255-275 (LSMTCFLQFFSTACAQCTICY) traverse the membrane as a helical segment. The Extracellular segment spans residues 276-285 (FLLFGNVGIM). A helical transmembrane segment spans residues 286-306 (RFMNMLFLLVILTTETLLLCY). The Cytoplasmic segment spans residues 307–336 (TAELPCKEGESLLTAVYSCNWLSQSVNFRR). Residues 337–357 (LLLLMLARCQIPMILVSGVIV) form a helical membrane-spanning segment. At 358–387 (PISMKTFTVMIKGAYTMLTLLNEIRKTSLE) the chain is on the extracellular side.

Belongs to the insect chemoreceptor superfamily. Heteromeric odorant receptor channel (TC 1.A.69) family. Or2a subfamily. Interacts with Orco. Complexes exist early in the endomembrane system in olfactory sensory neurons (OSNs), coupling these complexes to the conserved ciliary trafficking pathway.

The protein localises to the cell membrane. Functionally, odorant receptor which mediates acceptance or avoidance behavior, depending on its substrates. The odorant receptor repertoire encodes a large collection of odor stimuli that vary widely in identity, intensity, and duration. May form a complex with Orco to form odorant-sensing units, providing sensitive and prolonged odorant signaling and calcium permeability. In Drosophila melanogaster (Fruit fly), this protein is Putative odorant receptor 19b.